The following is a 386-amino-acid chain: 8-amino-7-oxononanoate synthase (386 aa).

R26 is a binding site for substrate. 104 to 105 (GY) is a binding site for pyridoxal 5'-phosphate. H129 contacts substrate. Residues S176, H204, and T232 each contribute to the pyridoxal 5'-phosphate site. An N6-(pyridoxal phosphate)lysine modification is found at K235. Residue T349 participates in substrate binding.

Belongs to the class-II pyridoxal-phosphate-dependent aminotransferase family. BioF subfamily. As to quaternary structure, homodimer. The cofactor is pyridoxal 5'-phosphate.

The catalysed reaction is 6-carboxyhexanoyl-[ACP] + L-alanine + H(+) = (8S)-8-amino-7-oxononanoate + holo-[ACP] + CO2. It participates in cofactor biosynthesis; biotin biosynthesis. In terms of biological role, catalyzes the decarboxylative condensation of pimeloyl-[acyl-carrier protein] and L-alanine to produce 8-amino-7-oxononanoate (AON), [acyl-carrier protein], and carbon dioxide. In Chromohalobacter salexigens (strain ATCC BAA-138 / DSM 3043 / CIP 106854 / NCIMB 13768 / 1H11), this protein is 8-amino-7-oxononanoate synthase.